The primary structure comprises 95 residues: Sec-independent protein translocase protein TatA (95 aa).

A helical transmembrane segment spans residues Met1–Phe21. The span at Ala44–Asp55 shows a compositional bias: basic and acidic residues. A disordered region spans residues Ala44 to Arg95.

Belongs to the TatA/E family. The Tat system comprises two distinct complexes: a TatABC complex, containing multiple copies of TatA, TatB and TatC subunits, and a separate TatA complex, containing only TatA subunits. Substrates initially bind to the TatABC complex, which probably triggers association of the separate TatA complex to form the active translocon.

It localises to the cell membrane. Its function is as follows. Part of the twin-arginine translocation (Tat) system that transports large folded proteins containing a characteristic twin-arginine motif in their signal peptide across membranes. TatA could form the protein-conducting channel of the Tat system. This Streptomyces coelicolor (strain ATCC BAA-471 / A3(2) / M145) protein is Sec-independent protein translocase protein TatA.